The chain runs to 142 residues: Bacilliredoxin ABC2448 (142 aa).

The protein belongs to the bacilliredoxin family.

This Shouchella clausii (strain KSM-K16) (Alkalihalobacillus clausii) protein is Bacilliredoxin ABC2448.